Here is a 386-residue protein sequence, read N- to C-terminus: Bifunctional enzyme IspD/IspF (386 aa).

The 2-C-methyl-D-erythritol 4-phosphate cytidylyltransferase stretch occupies residues 1 to 226 (MATPSPLPSF…EDFMADLLPV (226 aa)). The segment at 227-386 (RVGTGFDVHK…ATVVRKDTPA (160 aa)) is 2-C-methyl-D-erythritol 2,4-cyclodiphosphate synthase. The a divalent metal cation site is built by Asp-233 and His-235. 4-CDP-2-C-methyl-D-erythritol 2-phosphate contacts are provided by residues 233–235 (DVH) and 259–260 (HS). His-267 serves as a coordination point for a divalent metal cation. 4-CDP-2-C-methyl-D-erythritol 2-phosphate contacts are provided by residues 281-283 (DIG), 357-360 (TTTE), Phe-364, and Arg-367.

It in the N-terminal section; belongs to the IspD/TarI cytidylyltransferase family. IspD subfamily. In the C-terminal section; belongs to the IspF family. A divalent metal cation serves as cofactor.

The catalysed reaction is 2-C-methyl-D-erythritol 4-phosphate + CTP + H(+) = 4-CDP-2-C-methyl-D-erythritol + diphosphate. The enzyme catalyses 4-CDP-2-C-methyl-D-erythritol 2-phosphate = 2-C-methyl-D-erythritol 2,4-cyclic diphosphate + CMP. Its pathway is isoprenoid biosynthesis; isopentenyl diphosphate biosynthesis via DXP pathway; isopentenyl diphosphate from 1-deoxy-D-xylulose 5-phosphate: step 2/6. It participates in isoprenoid biosynthesis; isopentenyl diphosphate biosynthesis via DXP pathway; isopentenyl diphosphate from 1-deoxy-D-xylulose 5-phosphate: step 4/6. Functionally, bifunctional enzyme that catalyzes the formation of 4-diphosphocytidyl-2-C-methyl-D-erythritol from CTP and 2-C-methyl-D-erythritol 4-phosphate (MEP) (IspD), and catalyzes the conversion of 4-diphosphocytidyl-2-C-methyl-D-erythritol 2-phosphate (CDP-ME2P) to 2-C-methyl-D-erythritol 2,4-cyclodiphosphate (ME-CPP) with a corresponding release of cytidine 5-monophosphate (CMP) (IspF). This is Bifunctional enzyme IspD/IspF from Erythrobacter litoralis (strain HTCC2594).